The sequence spans 83 residues: Putative membrane protein insertion efficiency factor (83 aa).

The segment at 63-83 is disordered; that stretch reads GGNDPVPDHFSLRRNKTDISD. The segment covering 68 to 83 has biased composition (basic and acidic residues); the sequence is VPDHFSLRRNKTDISD.

This sequence belongs to the UPF0161 family.

Its subcellular location is the cell membrane. Functionally, could be involved in insertion of integral membrane proteins into the membrane. The protein is Putative membrane protein insertion efficiency factor of Streptococcus agalactiae serotype Ia (strain ATCC 27591 / A909 / CDC SS700).